A 264-amino-acid chain; its full sequence is CD320 antigen (264 aa).

Residues 1-28 form the signal peptide; it reads MARCGAGRAAALGLVLRLLLGLRTGPEA. The 38-residue stretch at 50-87 folds into the LDL-receptor class A 1 domain; that stretch reads SCPTDTFKCLTSGYCVPLSWRCDGDRDCSDGSDEEECR. 3 disulfides stabilise this stretch: Cys-51–Cys-64, Cys-58–Cys-77, and Cys-71–Cys-86. Trp-69, Asp-72, Asp-74, Asp-76, Asp-82, and Glu-83 together coordinate Ca(2+). An N-linked (GlcNAc...) asparagine glycan is attached at Asn-122. Positions 127-164 constitute an LDL-receptor class A 2 domain; sequence PCQEGELRCILDDVCIPHTWRCDGHPDCPDSSDELSCD. 3 cysteine pairs are disulfide-bonded: Cys-128–Cys-141, Cys-135–Cys-154, and Cys-148–Cys-163. Trp-146, Asp-149, His-151, Asp-153, Asp-159, and Glu-160 together coordinate Ca(2+). Asn-195 carries N-linked (GlcNAc...) asparagine glycosylation. Residues 213–233 traverse the membrane as a helical segment; the sequence is VIAAAGVLSAILVSATILILL.

Interacts (via LDL-receptor class A domains) with TCN2.

Its subcellular location is the cell membrane. Functionally, receptor for transcobalamin saturated with cobalamin (TCbl). Plays an important role in cobalamin uptake. Plasma membrane protein that is expressed on follicular dendritic cells (FDC) and mediates interaction with germinal center B cells. Functions as a costimulator to promote B cell responses to antigenic stimuli; promotes B cell differentiation and proliferation. Germinal center-B (GC-B) cells differentiate into memory B-cells and plasma cells (PC) through interaction with T-cells and follicular dendritic cells (FDC). CD320 augments the proliferation of PC precursors generated by IL-10. This Rattus norvegicus (Rat) protein is CD320 antigen (Cd320).